The primary structure comprises 243 residues: 3-deoxy-manno-octulosonate cytidylyltransferase (243 aa).

Belongs to the KdsB family.

It is found in the cytoplasm. It carries out the reaction 3-deoxy-alpha-D-manno-oct-2-ulosonate + CTP = CMP-3-deoxy-beta-D-manno-octulosonate + diphosphate. The protein operates within nucleotide-sugar biosynthesis; CMP-3-deoxy-D-manno-octulosonate biosynthesis; CMP-3-deoxy-D-manno-octulosonate from 3-deoxy-D-manno-octulosonate and CTP: step 1/1. Its pathway is bacterial outer membrane biogenesis; lipopolysaccharide biosynthesis. In terms of biological role, activates KDO (a required 8-carbon sugar) for incorporation into bacterial lipopolysaccharide in Gram-negative bacteria. The chain is 3-deoxy-manno-octulosonate cytidylyltransferase from Helicobacter pylori (strain G27).